Here is a 341-residue protein sequence, read N- to C-terminus: NADH-quinone oxidoreductase subunit H 2 (341 aa).

8 helical membrane passes run 13–33, 82–102, 115–135, 161–181, 190–210, 248–268, 277–297, and 317–337; these read IIVI…IAYI, GVFL…WAVI, VGVL…IMAG, IGFV…TAIV, MLGW…VSAL, YVAI…GWLP, WVPG…LFAM, and VFLP…QFAG.

It belongs to the complex I subunit 1 family. NDH-1 is composed of 14 different subunits. Subunits NuoA, H, J, K, L, M, N constitute the membrane sector of the complex.

The protein resides in the cell inner membrane. The enzyme catalyses a quinone + NADH + 5 H(+)(in) = a quinol + NAD(+) + 4 H(+)(out). Functionally, NDH-1 shuttles electrons from NADH, via FMN and iron-sulfur (Fe-S) centers, to quinones in the respiratory chain. The immediate electron acceptor for the enzyme in this species is believed to be ubiquinone. Couples the redox reaction to proton translocation (for every two electrons transferred, four hydrogen ions are translocated across the cytoplasmic membrane), and thus conserves the redox energy in a proton gradient. This subunit may bind ubiquinone. The protein is NADH-quinone oxidoreductase subunit H 2 of Rhodopseudomonas palustris (strain BisB5).